The following is a 351-amino-acid chain: Putative [LysW]-L-2-aminoadipate/[LysW]-L-glutamate phosphate reductase (351 aa).

Residues 9–12 (SGFV) and 33–35 (SRR) each bind NADP(+). Cys-150 is an active-site residue. Asn-318 serves as a coordination point for NADP(+).

The protein belongs to the NAGSA dehydrogenase family. Type 1 subfamily. LysY sub-subfamily.

The protein localises to the cytoplasm. The catalysed reaction is [amino-group carrier protein]-C-terminal-N-(1-carboxy-5-oxopentan-1-yl)-L-glutamine + phosphate + NADP(+) = [amino-group carrier protein]-C-terminal-N-(1-carboxy-5-phosphooxy-5-oxopentan-1-yl)-L-glutamine + NADPH + H(+). The enzyme catalyses [amino-group carrier protein]-C-terminal-gamma-(L-glutamyl-5-semialdehyde)-L-glutamate + phosphate + NADP(+) = [amino-group carrier protein]-C-terminal-gamma-(5-phospho-L-glutamyl)-L-glutamate + NADPH + H(+). It functions in the pathway amino-acid biosynthesis; L-lysine biosynthesis via AAA pathway; L-lysine from L-alpha-aminoadipate (Thermus route): step 3/5. It participates in amino-acid biosynthesis; L-arginine biosynthesis. Its function is as follows. Involved in both the arginine and lysine biosynthetic pathways. This chain is Putative [LysW]-L-2-aminoadipate/[LysW]-L-glutamate phosphate reductase, found in Pyrobaculum aerophilum (strain ATCC 51768 / DSM 7523 / JCM 9630 / CIP 104966 / NBRC 100827 / IM2).